The sequence spans 263 residues: Sepiapterin reductase (263 aa).

NADP(+) contacts are provided by residues 18-24 (GASRGFG), 46-47 (RT), and 73-74 (DL). Substrate is bound by residues 160–161 (SL) and Tyr173. Lys177 contacts NADP(+). Residue Gly202 participates in substrate binding. 204 to 209 (LDTDMH) contributes to the NADP(+) binding site. Position 260 (Asp260) interacts with substrate.

It belongs to the sepiapterin reductase family. As to quaternary structure, homodimer.

The protein localises to the cytoplasm. It carries out the reaction L-erythro-7,8-dihydrobiopterin + NADP(+) = L-sepiapterin + NADPH + H(+). The enzyme catalyses (6R)-L-erythro-5,6,7,8-tetrahydrobiopterin + 2 NADP(+) = 6-pyruvoyl-5,6,7,8-tetrahydropterin + 2 NADPH + 2 H(+). Functionally, catalyzes the final one or two reductions in tetra-hydrobiopterin biosynthesis to form 5,6,7,8-tetrahydrobiopterin. The polypeptide is Sepiapterin reductase (spr) (Xenopus laevis (African clawed frog)).